The chain runs to 434 residues: Cobyrinate a,c-diamide synthase (434 aa).

Residues 240–430 (KAYVAYDSAF…SHFHFSRTRR (191 aa)) form the GATase cobBQ-type domain. Catalysis depends on C322, which acts as the Nucleophile.

It belongs to the CobB/CbiA family. The cofactor is Mg(2+).

The enzyme catalyses cob(II)yrinate + 2 L-glutamine + 2 ATP + 2 H2O = cob(II)yrinate a,c diamide + 2 L-glutamate + 2 ADP + 2 phosphate + 2 H(+). The protein operates within cofactor biosynthesis; adenosylcobalamin biosynthesis; cob(II)yrinate a,c-diamide from sirohydrochlorin (anaerobic route): step 10/10. Functionally, catalyzes the ATP-dependent amidation of the two carboxylate groups at positions a and c of cobyrinate, using either L-glutamine or ammonia as the nitrogen source. This chain is Cobyrinate a,c-diamide synthase, found in Sulfolobus acidocaldarius (strain ATCC 33909 / DSM 639 / JCM 8929 / NBRC 15157 / NCIMB 11770).